The following is a 283-amino-acid chain: Pantothenate synthetase (283 aa).

30 to 37 (MGNLHSGH) contacts ATP. The Proton donor role is filled by H37. Q61 lines the (R)-pantoate pocket. Q61 is a binding site for beta-alanine. 149-152 (GEKD) contributes to the ATP binding site. Q155 lines the (R)-pantoate pocket. ATP-binding positions include V178 and 186-189 (LSSR).

This sequence belongs to the pantothenate synthetase family. As to quaternary structure, homodimer.

It localises to the cytoplasm. It carries out the reaction (R)-pantoate + beta-alanine + ATP = (R)-pantothenate + AMP + diphosphate + H(+). The protein operates within cofactor biosynthesis; (R)-pantothenate biosynthesis; (R)-pantothenate from (R)-pantoate and beta-alanine: step 1/1. Its function is as follows. Catalyzes the condensation of pantoate with beta-alanine in an ATP-dependent reaction via a pantoyl-adenylate intermediate. The polypeptide is Pantothenate synthetase (Pseudomonas savastanoi pv. phaseolicola (strain 1448A / Race 6) (Pseudomonas syringae pv. phaseolicola (strain 1448A / Race 6))).